The chain runs to 285 residues: UstYa family oxidase phomYe (285 aa).

A helical transmembrane segment spans residues 32–54 (LFYGWKGIAFLSTLTNVLFISGF). The interval 143 to 165 (YGFGTPLTGPGSEGNEHDPTPWT) is disordered. An HXXHC 1 motif is present at residues 177–181 (HQLHC). N-linked (GlcNAc...) asparagine glycosylation is present at Asn202. The HXXHC 2 motif lies at 209–213 (HVDHC).

The protein belongs to the ustYa family.

Its subcellular location is the membrane. Its pathway is mycotoxin biosynthesis. In terms of biological role, ustYa family oxidase; part of the gene cluster that mediates the biosynthesis of the phomopsins, a group of hexapeptide mycotoxins which infects lupins and causes lupinosis disease in livestock. Within the pathway, phomYe catalyzes the desaturation of the Pro moiety into 3,4-dehydroproline (dPro). The pathway starts with the processing of the precursor phomA by several endopeptidases including kexin proteases as well as the cluster-specific S41 family peptidase phomP1 and the oligopeptidase phomG to produce 10 identical copies of the hexapeptide Tyr-Val-Ile-Pro-Ile-Asp. After being excised from the precursor peptide, the core peptides are cyclized and modified post-translationally by enzymes encoded within the gene cluster. The timing and order of proteolysis of the phomA precursor and PTMs are still unknown. Two tyrosinase-like enzymes, phomQ1 and phomQ2, catalyze the chlorination and hydroxylation of Tyr, respectively. PhomYb, is proposed to be involved in the construction of the macrocyclic structure. The other 4 ustYa family proteins may be involved in PTMs that generate the unique structure of phomopsin A. PhomYa is required for the hydroxylation of C-beta of Tyr. PhomYc, phomYd, and phomYe are responsible for the biosynthesis of 2,3-dehydroisoleucine (dIle), 2,3-dehydroaspartic acid (dAsp), and 3,4-dehydroproline (dPro), respectively. While dIle formation by phomYc is indispensable for the installation of dAsp by phomYd, the order of the other PTMs have not been elucidated yet. Most of the biosynthetic enzymes likely have broad substrate specificity, and thus, there might be a metabolic grid from a precursor to phomopsin A. The enzyme(s) responsible for the biosynthesis of 3,4-dehydrovaline (dVal) have also not been identified yet. Finally, phomM acts as an S-adenosylmethionine-dependent alpha-N-methyltransferase that catalyzes two successive N-methylation reactions, converting N-desmethyl-phomopsin A to phomopsin A and phomopsin A further to an N,N-dimethylated congener called phomopsin E. The sequence is that of UstYa family oxidase phomYe from Diaporthe leptostromiformis (Lupinosis disease fungus).